A 369-amino-acid polypeptide reads, in one-letter code: Queuine tRNA-ribosyltransferase (369 aa).

Aspartate 90 acts as the Proton acceptor in catalysis. Substrate contacts are provided by residues 90-94 (DSGGF), aspartate 144, glutamine 186, and glycine 213. The RNA binding stretch occupies residues 244–250 (GVGKPAD). The active-site Nucleophile is aspartate 263. Zn(2+)-binding residues include cysteine 301, cysteine 303, cysteine 306, and histidine 332.

This sequence belongs to the queuine tRNA-ribosyltransferase family. As to quaternary structure, homodimer. Within each dimer, one monomer is responsible for RNA recognition and catalysis, while the other monomer binds to the replacement base PreQ1. It depends on Zn(2+) as a cofactor.

It carries out the reaction 7-aminomethyl-7-carbaguanine + guanosine(34) in tRNA = 7-aminomethyl-7-carbaguanosine(34) in tRNA + guanine. Its pathway is tRNA modification; tRNA-queuosine biosynthesis. Its function is as follows. Catalyzes the base-exchange of a guanine (G) residue with the queuine precursor 7-aminomethyl-7-deazaguanine (PreQ1) at position 34 (anticodon wobble position) in tRNAs with GU(N) anticodons (tRNA-Asp, -Asn, -His and -Tyr). Catalysis occurs through a double-displacement mechanism. The nucleophile active site attacks the C1' of nucleotide 34 to detach the guanine base from the RNA, forming a covalent enzyme-RNA intermediate. The proton acceptor active site deprotonates the incoming PreQ1, allowing a nucleophilic attack on the C1' of the ribose to form the product. After dissociation, two additional enzymatic reactions on the tRNA convert PreQ1 to queuine (Q), resulting in the hypermodified nucleoside queuosine (7-(((4,5-cis-dihydroxy-2-cyclopenten-1-yl)amino)methyl)-7-deazaguanosine). The polypeptide is Queuine tRNA-ribosyltransferase (Dichelobacter nodosus (strain VCS1703A)).